The sequence spans 1507 residues: DE-cadherin (1507 aa).

Residues 1-69 (MSTSVQRMSR…AISLLSPALA (69 aa)) form the signal peptide. A propeptide spanning residues 70-261 (LHSPPDKNFS…IYLKRPIDKR (192 aa)) is cleaved from the precursor. Cadherin domains lie at 97–195 (VKEE…APAF), 204–301 (MSEN…PPSF), 311–412 (LKEN…IPYY), 420–522 (ILEN…KPHF), 532–633 (LLED…TILE), 631–733 (ILEE…APFL), and 741–835 (WQEN…NDNA). Over 262 to 1328 (PGQSYAIIVR…VAFSFGIDRN (1067 aa)) the chain is Extracellular. N-linked (GlcNAc...) asparagine glycosylation is found at Asn317, Asn466, and Asn552. N-linked (GlcNAc...) asparagine glycans are attached at residues Asn766, Asn949, Asn983, Asn999, and Asn1073. The 40-residue stretch at 1084 to 1123 (VQAQCVCEAPLMRRCLNGGSPRYGENDVCDCIDGFTGPHC) folds into the EGF-like domain. 2 disulfides stabilise this stretch: Cys1098/Cys1112 and Cys1114/Cys1123. The region spanning 1125–1313 (LVSVAFYGSG…SVFRNIDSGC (189 aa)) is the Laminin G-like domain. N-linked (GlcNAc...) asparagine glycosylation is found at Asn1145, Asn1274, and Asn1290. A disulfide bond links Cys1287 and Cys1313. The helical transmembrane segment at 1329–1349 (FIIAIIVCLALLLIILLAVVV) threads the bilayer. Residues 1350 to 1507 (QKKQKNGWHE…NVDDDQGWRI (158 aa)) are Cytoplasmic-facing. The interaction with Inx2 stretch occupies residues 1350–1507 (QKKQKNGWHE…NVDDDQGWRI (158 aa)). Residues 1488 to 1507 (YGEEPSDTDSNVDDDQGWRI) are disordered. Phosphoserine is present on Ser1493.

In terms of assembly, interacts (via cytoplasmic region) with Inx2 (via cytoplasmic loop). Interacts with Hakai. Interacts with Myo31DF. In terms of processing, N-glycosylation is important for biosynthesis and function. As to expression, in early stage 9 and stage 10 oocytes, expressed in border cells, strongly expressed in polar cells and very weakly expressed in the nurse cells (at protein level). In the embryo, expressed in the leading edge cells of the dorsal epidermis (at protein level). Stage 10 embryos exhibit intense expression in epithelial cells. Stage 14 embryos show expression in the hindgut (at the apical poles of cell-cell boundaries), at the apical junctions of tracheal cells and in the dorsal longitudinal trunk. In stage 16 embryos the glial midline cells of the central nervous system show strong expression.

It is found in the cell membrane. Its subcellular location is the apical cell membrane. In terms of biological role, cadherins are calcium-dependent cell adhesion proteins. In connecting cells they preferentially interact with themselves in a homophilic manner; cadherins may thus contribute to the sorting of heterogeneous cell types. During oogenesis, integral component of the guidance mechanisms that regulate the directional persistent collective migration of the border cell (BC) cluster through the nurse cells to the oocyte. Functions downstream of the two chemoattractant receptors, Pvr and Egfr, to promote BC adhesion between the leader cells of the migrating cluster and the surrounding nurse cells. This adhesion increases Rac1 signaling in the leading cells, which in turn stabilizes DE-cadherin/DE-cadherin adhesions through the formation of forward-directed protrusions which attach/detach to the surrounding nurse cells in order to pull the cluster through the egg chamber to the oocyte. Within the BC cluster, also promotes adhesion between BCs, and between BCs and polar cells which enables the lead BC to communicate direction to the other cells in the cluster, providing polarity to each individual cell and ensuring collective behavior. May function in cell intercalation in the lateral epidermis during germband extension. Contributes to the determination of body left-right asymmetry by enhancing Myo31DF activity and inhibiting Myo61F activity. The polypeptide is DE-cadherin (Drosophila melanogaster (Fruit fly)).